The chain runs to 347 residues: Endo-1,4-beta-xylanase 3 (347 aa).

An N-terminal signal peptide occupies residues 1–16 (MKANVILCLLAPLVAA). Residues 17–45 (LPTETIHLDPELAALRANLTERTADLWDR) constitute a propeptide that is removed on maturation. Glutamine 46 carries the pyrrolidone carboxylic acid modification. The GH10 domain occupies 46–345 (QASQSIDQLI…KPAYNSIVGI (300 aa)). Glutamate 176 (proton donor) is an active-site residue. Catalysis depends on glutamate 282, which acts as the Nucleophile. A disulfide bond links cysteine 300 and cysteine 306.

Belongs to the glycosyl hydrolase 10 (cellulase F) family. Monomer. Not glycosylated.

The protein resides in the secreted. The catalysed reaction is Endohydrolysis of (1-&gt;4)-beta-D-xylosidic linkages in xylans.. It participates in glycan degradation; xylan degradation. In terms of biological role, glycoside hydrolase involved in the hydrolysis of xylan, a major plant cell wall hemicellulose made up of 1,4-beta-linked D-xylopyranose residues. Catalyzes the endohydrolysis of the main-chain 1,4-beta-glycosidic bonds connecting the xylose subunits yielding various xylooligosaccharides and xylose. Produces xylobiose and xylotriose as the main degradation products. This Hypocrea jecorina (strain QM6a) (Trichoderma reesei) protein is Endo-1,4-beta-xylanase 3 (xyn3).